The following is a 112-amino-acid chain: HTH-type transcriptional regulator YodB (112 aa).

The HTH hxlR-type domain occupies C6–D105.

Negatively regulates yodC and azoR1 which may contribute to the degradation of aromatic compounds. Probably positively regulates the catechol-specific transcription of mhqNOP, mhqED, and mhqA. This Bacillus subtilis (strain 168) protein is HTH-type transcriptional regulator YodB (yodB).